Here is a 173-residue protein sequence, read N- to C-terminus: Transcription factor E (173 aa).

The 84-residue stretch at 9–92 (ADKAIFAYLH…LWELELDNMY (84 aa)) folds into the HTH TFE/IIEalpha-type domain.

The protein belongs to the TFE family. In terms of assembly, monomer. Interaction with RNA polymerase subunits RpoF and RpoE is necessary for Tfe stimulatory transcription activity. Able to interact with Tbp and RNA polymerase in the absence of DNA promoter. Interacts both with the preinitiation and elongation complexes.

In terms of biological role, transcription factor that plays a role in the activation of archaeal genes transcribed by RNA polymerase. Facilitates transcription initiation by enhancing TATA-box recognition by TATA-box-binding protein (Tbp), and transcription factor B (Tfb) and RNA polymerase recruitment. Not absolutely required for transcription in vitro, but particularly important in cases where Tbp or Tfb function is not optimal. It dynamically alters the nucleic acid-binding properties of RNA polymerases by stabilizing the initiation complex and destabilizing elongation complexes. Seems to translocate with the RNA polymerase following initiation and acts by binding to the non template strand of the transcription bubble in elongation complexes. The protein is Transcription factor E of Methanospirillum hungatei JF-1 (strain ATCC 27890 / DSM 864 / NBRC 100397 / JF-1).